A 121-amino-acid polypeptide reads, in one-letter code: UPF0145 protein SGR_4080 (121 aa).

This sequence belongs to the UPF0145 family.

This Streptomyces griseus subsp. griseus (strain JCM 4626 / CBS 651.72 / NBRC 13350 / KCC S-0626 / ISP 5235) protein is UPF0145 protein SGR_4080.